The following is a 235-amino-acid chain: Endonuclease V (235 aa).

Residues Asp47 and Asp117 each contribute to the Mg(2+) site.

The protein belongs to the endonuclease V family. Requires Mg(2+) as cofactor.

Its subcellular location is the cytoplasm. It carries out the reaction Endonucleolytic cleavage at apurinic or apyrimidinic sites to products with a 5'-phosphate.. DNA repair enzyme involved in the repair of deaminated bases. Selectively cleaves double-stranded DNA at the second phosphodiester bond 3' to a deoxyinosine leaving behind the intact lesion on the nicked DNA. The chain is Endonuclease V from Protochlamydia amoebophila (strain UWE25).